Here is a 263-residue protein sequence, read N- to C-terminus: Transcription factor 19-like protein (263 aa).

In terms of domain architecture, FHA spans Tyr31–Leu88. Ser78 carries the phosphoserine modification. Disordered regions lie at residues Ser140–Thr164 and Leu189–Ala225.

Its subcellular location is the nucleus. Functionally, potential transcription factor that may play a role in the regulation of genes involved in cell cycle G1/S transition. May bind to regulatory elements of genes, including the promoter of the transcription factor FOXO1. In Mus musculus (Mouse), this protein is Transcription factor 19-like protein (Tcf19).